Reading from the N-terminus, the 116-residue chain is Cystatin (116 aa).

Positions 53–57 (QLVSG) match the Secondary area of contact motif. Disulfide bonds link cysteine 71–cysteine 81 and cysteine 95–cysteine 115. The residue at position 80 (serine 80) is a Phosphoserine.

This sequence belongs to the cystatin family.

It localises to the secreted. This protein binds tightly to and inhibits papain and cathepsin B. This chain is Cystatin, found in Coturnix japonica (Japanese quail).